The sequence spans 267 residues: tRNA pseudouridine synthase A (267 aa).

Asp53 acts as the Nucleophile in catalysis. Tyr114 is a substrate binding site.

The protein belongs to the tRNA pseudouridine synthase TruA family. Homodimer.

The catalysed reaction is uridine(38/39/40) in tRNA = pseudouridine(38/39/40) in tRNA. Functionally, formation of pseudouridine at positions 38, 39 and 40 in the anticodon stem and loop of transfer RNAs. This is tRNA pseudouridine synthase A from Chlamydia trachomatis serovar L2b (strain UCH-1/proctitis).